The following is a 291-amino-acid chain: Serine hydrolase BPHL (291 aa).

Positions Met1–Thr37 are cleaved as a signal peptide. One can recognise an AB hydrolase-1 domain in the interval Ala62–Ser173. Lys74 carries the N6-acetyllysine; alternate modification. The residue at position 74 (Lys74) is an N6-succinyllysine; alternate. 2 positions are modified to N6-acetyllysine: Lys86 and Lys119. Lys126 is modified (N6-acetyllysine; alternate). Lys126 carries the N6-succinyllysine; alternate modification. Catalysis depends on Ser139, which acts as the Nucleophile. Residue Lys184 is modified to N6-succinyllysine. Lys191 carries the post-translational modification N6-acetyllysine; alternate. Lys191 is subject to N6-succinyllysine; alternate. Lys217 carries the N6-acetyllysine modification. Residue Glu221 coordinates Mg(2+). The residue at position 243 (Lys243) is an N6-acetyllysine. Asp244 functions as the Charge relay system in the catalytic mechanism. N6-acetyllysine; alternate occurs at positions 260 and 271. Residues Lys260 and Lys271 each carry the N6-succinyllysine; alternate modification. Residue His272 is the Charge relay system of the active site.

It belongs to the AB hydrolase superfamily. Lipase family. Monomer. May also form homodimers.

The protein resides in the mitochondrion. It catalyses the reaction L-homocysteine thiolactone + H2O = L-homocysteine + H(+). It carries out the reaction valacyclovir + H2O = acyclovir + L-valine + H(+). In terms of biological role, specific alpha-amino acid ester serine hydrolase that prefers small, hydrophobic, and aromatic side chains and does not have a stringent requirement for the leaving group other than preferring a primary alcohol. Has homocysteine-thiolactonase activity (in vitro) and may play a significant role in the detoxification of homocysteine thiolactone in vivo. Catalyzes the hydrolytic activation of amino acid ester prodrugs of nucleoside analogs such as valacyclovir and valganciclovir, converting them into their active forms (acyclovir and ganciclovir). The protein is Serine hydrolase BPHL (Bphl) of Mus musculus (Mouse).